The following is a 172-amino-acid chain: Peptide deformylase (172 aa).

2 residues coordinate Fe cation: Cys92 and His134. The active site involves Glu135. Position 138 (His138) interacts with Fe cation.

Belongs to the polypeptide deformylase family. Fe(2+) is required as a cofactor.

The catalysed reaction is N-terminal N-formyl-L-methionyl-[peptide] + H2O = N-terminal L-methionyl-[peptide] + formate. In terms of biological role, removes the formyl group from the N-terminal Met of newly synthesized proteins. Requires at least a dipeptide for an efficient rate of reaction. N-terminal L-methionine is a prerequisite for activity but the enzyme has broad specificity at other positions. This Saccharophagus degradans (strain 2-40 / ATCC 43961 / DSM 17024) protein is Peptide deformylase.